A 223-amino-acid chain; its full sequence is Deoxyribose-phosphate aldolase 1 (223 aa).

The active-site Proton donor/acceptor is Asp-91. The active-site Schiff-base intermediate with acetaldehyde is Lys-154. Lys-183 (proton donor/acceptor) is an active-site residue.

It belongs to the DeoC/FbaB aldolase family. DeoC type 1 subfamily.

It is found in the cytoplasm. It catalyses the reaction 2-deoxy-D-ribose 5-phosphate = D-glyceraldehyde 3-phosphate + acetaldehyde. It functions in the pathway carbohydrate degradation; 2-deoxy-D-ribose 1-phosphate degradation; D-glyceraldehyde 3-phosphate and acetaldehyde from 2-deoxy-alpha-D-ribose 1-phosphate: step 2/2. In terms of biological role, catalyzes a reversible aldol reaction between acetaldehyde and D-glyceraldehyde 3-phosphate to generate 2-deoxy-D-ribose 5-phosphate. The protein is Deoxyribose-phosphate aldolase 1 of Bacillus licheniformis (strain ATCC 14580 / DSM 13 / JCM 2505 / CCUG 7422 / NBRC 12200 / NCIMB 9375 / NCTC 10341 / NRRL NRS-1264 / Gibson 46).